A 480-amino-acid polypeptide reads, in one-letter code: Aspartyl/glutamyl-tRNA(Asn/Gln) amidotransferase subunit B (480 aa).

It belongs to the GatB/GatE family. GatB subfamily. Heterotrimer of A, B and C subunits.

It carries out the reaction L-glutamyl-tRNA(Gln) + L-glutamine + ATP + H2O = L-glutaminyl-tRNA(Gln) + L-glutamate + ADP + phosphate + H(+). The catalysed reaction is L-aspartyl-tRNA(Asn) + L-glutamine + ATP + H2O = L-asparaginyl-tRNA(Asn) + L-glutamate + ADP + phosphate + 2 H(+). In terms of biological role, allows the formation of correctly charged Asn-tRNA(Asn) or Gln-tRNA(Gln) through the transamidation of misacylated Asp-tRNA(Asn) or Glu-tRNA(Gln) in organisms which lack either or both of asparaginyl-tRNA or glutaminyl-tRNA synthetases. The reaction takes place in the presence of glutamine and ATP through an activated phospho-Asp-tRNA(Asn) or phospho-Glu-tRNA(Gln). The protein is Aspartyl/glutamyl-tRNA(Asn/Gln) amidotransferase subunit B of Streptococcus thermophilus (strain ATCC BAA-250 / LMG 18311).